We begin with the raw amino-acid sequence, 188 residues long: MSKKSTNIFTCSGAQHKWIQVVNIDGNIFSIYVCFFVCFFFYLEPSSDDESYEVLDLTEYARRHHWWNRLFGRNSGPLTEKYSVATQIVIGGVSGWCAGFLFQKVGKLAATAVGGGFLLLQIASHGGYIQIDWKRVEKDVNKAKRKIKKEANKTPEINTVIEKSTDFFKKNIVVSGGFVGGFLIGLAS.

The chain crosses the membrane as a helical span at residues 21-41 (VVNIDGNIFSIYVCFFVCFFF). A YXXL motif is present at residues 52–55 (YEVL). The next 3 helical transmembrane spans lie at 82–102 (YSVA…GFLF), 109–129 (AATA…GGYI), and 167–187 (FFKK…IGLA).

It belongs to the FUN14 family.

It localises to the mitochondrion outer membrane. Acts as an activator of hypoxia-induced mitophagy, an important mechanism for mitochondrial quality control. In Xenopus laevis (African clawed frog), this protein is FUN14 domain-containing protein 1B (fundc1-b).